The primary structure comprises 293 residues: ATP phosphoribosyltransferase (293 aa).

This sequence belongs to the ATP phosphoribosyltransferase family. Long subfamily. Mg(2+) serves as cofactor.

The protein localises to the cytoplasm. The enzyme catalyses 1-(5-phospho-beta-D-ribosyl)-ATP + diphosphate = 5-phospho-alpha-D-ribose 1-diphosphate + ATP. Its pathway is amino-acid biosynthesis; L-histidine biosynthesis; L-histidine from 5-phospho-alpha-D-ribose 1-diphosphate: step 1/9. With respect to regulation, feedback inhibited by histidine. Its function is as follows. Catalyzes the condensation of ATP and 5-phosphoribose 1-diphosphate to form N'-(5'-phosphoribosyl)-ATP (PR-ATP). Has a crucial role in the pathway because the rate of histidine biosynthesis seems to be controlled primarily by regulation of HisG enzymatic activity. The sequence is that of ATP phosphoribosyltransferase from Nitratidesulfovibrio vulgaris (strain ATCC 29579 / DSM 644 / CCUG 34227 / NCIMB 8303 / VKM B-1760 / Hildenborough) (Desulfovibrio vulgaris).